A 719-amino-acid polypeptide reads, in one-letter code: DNA polymerase epsilon subunit B (719 aa).

A disordered region spans residues Ser-107–Ile-147.

The protein belongs to the DNA polymerase epsilon subunit B family. Heterotetramer. Consists of four subunits: POL2, DPB2, DPB3 and DPB4.

It is found in the nucleus. In terms of biological role, as accessory component of the DNA polymerase epsilon (DNA polymerase II) participates in chromosomal DNA replication. The protein is DNA polymerase epsilon subunit B (DPB2) of Candida glabrata (strain ATCC 2001 / BCRC 20586 / JCM 3761 / NBRC 0622 / NRRL Y-65 / CBS 138) (Yeast).